A 179-amino-acid polypeptide reads, in one-letter code: UPF0227 protein VIBHAR_01524 (179 aa).

The protein belongs to the UPF0227 family.

The polypeptide is UPF0227 protein VIBHAR_01524 (Vibrio campbellii (strain ATCC BAA-1116)).